Reading from the N-terminus, the 472-residue chain is Glycosyl hydrolase family 109 protein (472 aa).

Residues 1-35 (MSQTPAVSRRLLLGSAAATGALATGIGSAAPVAAA) constitute a signal peptide (tat-type signal). NAD(+)-binding positions include 68 to 69 (NR), D90, 139 to 142 (WEFH), H145, 159 to 160 (EL), and N188. Substrate contacts are provided by residues Y217, R236, 248-251 (YPMH), and Y330. Y248 lines the NAD(+) pocket.

Belongs to the Gfo/Idh/MocA family. Glycosyl hydrolase 109 subfamily. It depends on NAD(+) as a cofactor. Post-translationally, predicted to be exported by the Tat system. The position of the signal peptide cleavage has not been experimentally proven.

Glycosidase. Has no alpha-N-acetylgalactosaminidase activity. This is Glycosyl hydrolase family 109 protein from Streptomyces coelicolor (strain ATCC BAA-471 / A3(2) / M145).